Here is a 707-residue protein sequence, read N- to C-terminus: MQNSESGSDSPASVALCSSAAAQAPVAQPVTASPQRVLVQAAGSAPKGAQMQPLSLPRVQQVTQQVQPAQHVYPAQLQYVEGGDAVFTNGALRTAYAYNPEPQMYAPSSAASYFEAPGGAQVTVAGSSPPAVPSHSMVGITMDVGGSPIVSSAGAYLIHGGMDGTRHTLAHTSRSSPATLEMAIENLQKSEGITSHKSGLLNSHLQWLLDNYETAEGVSLPRSSLYNHYLRHCQEHKLDPVNAASFGKLIRSVFMGLRTRRLGTRGNSKYHYYGIRLKPDSPLNRLQEDTQYMAMRQQPVHQKPRYRPAQKTDSLGESGSHSSLHSTPEQAMAAQSQHHQQYIDVSHVFPEFPAPDLGSVLLQESITLHDVKALQLAYRRHCEATLDVVMNLQFHYIEKLWLSFWNSKSSSDGPTSLPASDEEPEGAVLPKDKLVSLCKCDPVLRWMRTCDHILYQALVEILIPDVLRPVPSTLTQAIRNFAKSLEGWLTNAMSDFPQQVIQTKVGVVSAFAQTLRRYTSLNHLAQAARAVLQNTSQINQMLSDLNRVDFANVQEQASWVCQCEEGVVQRLEQDFKLTLQQQSSLDQWASWLDNVVTQVLKQHAGSPSFPKAARQFLLKWSFYSSMVIRDLTLRSAASFGSFHLIRLLYDEYMFYLVEHRVAEATGETPIAVMGEFNDLASLSLTLLDKGGCVWALPPVHSGGGGSP.

S33 is modified (phosphoserine). The RFX-type winged-helix DNA-binding region spans 204–279 (HLQWLLDNYE…YHYYGIRLKP (76 aa)). Residues 297 to 337 (QQPVHQKPRYRPAQKTDSLGESGSHSSLHSTPEQAMAAQSQ) are disordered. Low complexity predominate over residues 315-337 (LGESGSHSSLHSTPEQAMAAQSQ). At S420 the chain carries Phosphoserine.

This sequence belongs to the RFX family. Homodimer; probably only forms homodimers in testis. Heterodimer; heterodimerizes with RFX1 and RFX3.

It localises to the nucleus. The protein resides in the cytoplasm. Functionally, transcription factor that acts as a key regulator of spermatogenesis. Acts by regulating expression of genes required for the haploid phase during spermiogenesis, such as genes required for cilium assembly and function. Recognizes and binds the X-box, a regulatory motif with DNA sequence 5'-GTNRCC(0-3N)RGYAAC-3' present on promoters. Probably activates transcription of the testis-specific histone gene H1-6. The protein is DNA-binding protein RFX2 (RFX2) of Bos taurus (Bovine).